Here is a 352-residue protein sequence, read N- to C-terminus: Holliday junction branch migration complex subunit RuvB (352 aa).

Positions 13–201 (FSLRKKELRL…FGISQKIEFY (189 aa)) are large ATPase domain (RuvB-L). ATP is bound by residues arginine 41, glycine 82, lysine 85, threonine 86, threonine 87, 148-150 (EDF), arginine 191, tyrosine 201, and arginine 238. Threonine 86 provides a ligand contact to Mg(2+). Residues 202 to 273 (TCDELKQIID…LIKKALNSYQ (72 aa)) form a small ATPAse domain (RuvB-S) region. The tract at residues 276-352 (EKGLDYVDRQ…KYIDSKNDNF (77 aa)) is head domain (RuvB-H). 2 residues coordinate DNA: arginine 330 and arginine 335.

Belongs to the RuvB family. As to quaternary structure, homohexamer. Forms an RuvA(8)-RuvB(12)-Holliday junction (HJ) complex. HJ DNA is sandwiched between 2 RuvA tetramers; dsDNA enters through RuvA and exits via RuvB. An RuvB hexamer assembles on each DNA strand where it exits the tetramer. Each RuvB hexamer is contacted by two RuvA subunits (via domain III) on 2 adjacent RuvB subunits; this complex drives branch migration. In the full resolvosome a probable DNA-RuvA(4)-RuvB(12)-RuvC(2) complex forms which resolves the HJ.

It localises to the cytoplasm. It catalyses the reaction ATP + H2O = ADP + phosphate + H(+). Functionally, the RuvA-RuvB-RuvC complex processes Holliday junction (HJ) DNA during genetic recombination and DNA repair, while the RuvA-RuvB complex plays an important role in the rescue of blocked DNA replication forks via replication fork reversal (RFR). RuvA specifically binds to HJ cruciform DNA, conferring on it an open structure. The RuvB hexamer acts as an ATP-dependent pump, pulling dsDNA into and through the RuvAB complex. RuvB forms 2 homohexamers on either side of HJ DNA bound by 1 or 2 RuvA tetramers; 4 subunits per hexamer contact DNA at a time. Coordinated motions by a converter formed by DNA-disengaged RuvB subunits stimulates ATP hydrolysis and nucleotide exchange. Immobilization of the converter enables RuvB to convert the ATP-contained energy into a lever motion, pulling 2 nucleotides of DNA out of the RuvA tetramer per ATP hydrolyzed, thus driving DNA branch migration. The RuvB motors rotate together with the DNA substrate, which together with the progressing nucleotide cycle form the mechanistic basis for DNA recombination by continuous HJ branch migration. Branch migration allows RuvC to scan DNA until it finds its consensus sequence, where it cleaves and resolves cruciform DNA. This chain is Holliday junction branch migration complex subunit RuvB, found in Prochlorococcus marinus (strain MIT 9312).